The chain runs to 349 residues: Carbamoyl phosphate synthase small chain (349 aa).

The interval 1-170 is CPSase; the sequence is MKAKLILENG…KYEISGEGKK (170 aa). Ser-45, Gly-218, and Gly-220 together coordinate L-glutamine. One can recognise a Glutamine amidotransferase type-1 domain in the interval 170–349; that stretch reads KVAIIDFGIK…IFDEFMKYAL (180 aa). Residue Cys-245 is the Nucleophile of the active site. 5 residues coordinate L-glutamine: Leu-246, Gln-249, Asn-287, Gly-289, and Tyr-290. Catalysis depends on residues His-327 and Glu-329.

The protein belongs to the CarA family. Composed of two chains; the small (or glutamine) chain promotes the hydrolysis of glutamine to ammonia, which is used by the large (or ammonia) chain to synthesize carbamoyl phosphate. Tetramer of heterodimers (alpha,beta)4.

It carries out the reaction hydrogencarbonate + L-glutamine + 2 ATP + H2O = carbamoyl phosphate + L-glutamate + 2 ADP + phosphate + 2 H(+). The catalysed reaction is L-glutamine + H2O = L-glutamate + NH4(+). It functions in the pathway amino-acid biosynthesis; L-arginine biosynthesis; carbamoyl phosphate from bicarbonate: step 1/1. It participates in pyrimidine metabolism; UMP biosynthesis via de novo pathway; (S)-dihydroorotate from bicarbonate: step 1/3. Functionally, small subunit of the glutamine-dependent carbamoyl phosphate synthetase (CPSase). CPSase catalyzes the formation of carbamoyl phosphate from the ammonia moiety of glutamine, carbonate, and phosphate donated by ATP, constituting the first step of 2 biosynthetic pathways, one leading to arginine and/or urea and the other to pyrimidine nucleotides. The small subunit (glutamine amidotransferase) binds and cleaves glutamine to supply the large subunit with the substrate ammonia. The polypeptide is Carbamoyl phosphate synthase small chain (Clostridium perfringens (strain 13 / Type A)).